Consider the following 432-residue polypeptide: Proteinase-activated receptor 1 (432 aa).

An N-terminal signal peptide occupies residues 1–21 (MGPRRLLLVAVGLSLCGPLLS). Residues 22 to 45 (SRVPMRQPESERMYATPYATPNPR) constitute a propeptide, removed for receptor activation. Topologically, residues 46-109 (SFFLRNPSED…SGYLTSPWLT (64 aa)) are extracellular. Asn69 and Asn82 each carry an N-linked (GlcNAc...) asparagine glycan. A helical membrane pass occupies residues 110 to 135 (LFIPSVYTFVFIVSLPLNILAIAVFV). Residues 136–144 (FRMKVKKPA) lie on the Cytoplasmic side of the membrane. Residues 145–164 (VVYMLHLAMADVLFVSVLPF) form a helical membrane-spanning segment. Topologically, residues 165–183 (KISYYFSGTDWQFGSGMCR) are extracellular. Cysteines 182 and 261 form a disulfide. Residues 184–205 (FATAACYCNMYASIMLMTVISI) traverse the membrane as a helical segment. Residues 206 to 225 (DRFLAVVYPIQSLSWRTLGR) are Cytoplasmic-facing. The chain crosses the membrane as a helical span at residues 226–246 (ANFTCVVIWVMAIMGVVPLLL). Residues 247–275 (KEQTTQVPGLNITTCHDVLNETLLHGFYS) lie on the Extracellular side of the membrane. Residues Asn257 and Asn266 are each glycosylated (N-linked (GlcNAc...) asparagine). The helical transmembrane segment at 276–295 (YYFSAFSAIFFLVPLIISTV) threads the bilayer. At 296–318 (CYTSIIRCLSSSAVANRSKKSRA) the chain is on the cytoplasmic side. The chain crosses the membrane as a helical span at residues 319–341 (LFLSAAVFCIFIVCFGPTNVLLI). Residues 342–357 (VHYLLLSDSPGTETAY) lie on the Extracellular side of the membrane. Residues 358–381 (FAYLLCVCVTSVASCIDPLIYYYA) form a helical membrane-spanning segment. Over 382 to 432 (SSECQKHLYSILCCRESSDSNSCNSTGQLMPSKMDTCSSHLNNSIYKKLLA) the chain is Cytoplasmic. A Phosphoserine modification is found at Ser425.

It belongs to the G-protein coupled receptor 1 family. Post-translationally, proteolytic cleavage by thrombin generates a new N-terminus that functions as a tethered ligand. Also proteolytically cleaved by cathepsin CTSG. In terms of processing, phosphorylated in the C-terminal tail; probably mediating desensitization prior to the uncoupling and internalization of the receptor. Expressed in primary cultured oligodendrocytes.

The protein localises to the cell membrane. Its function is as follows. High affinity receptor that binds the activated thrombin, leading to calcium release from intracellular stores. The thrombin-activated receptor signaling pathway is mediated through PTX-insensitive G proteins, activation of phospholipase C resulting in the production of 1D-myo-inositol 1,4,5-trisphosphate (InsP3) which binds to InsP3 receptors causing calcium release from the stores. In astrocytes, the calcium released into the cytosol allows the Ca(2+)-dependent release of L-glutamate into the synaptic cleft through BEST1, that targets the neuronal postsynaptic GRIN2A/NMDAR receptor resulting in the synaptic plasticity regulation. May play a role in platelets activation and in vascular development. Mediates up-regulation of pro-inflammatory cytokines, such as MCP-1/CCL2 and IL6, triggered by coagulation factor Xa (F10) in cardiac fibroblasts and umbilical vein endothelial cells. The sequence is that of Proteinase-activated receptor 1 from Rattus norvegicus (Rat).